A 52-amino-acid polypeptide reads, in one-letter code: Lysis protein for colicin N (52 aa).

The N-terminal stretch at 1-17 (MCGKILLILFFIMTLSA) is a signal peptide. A lipid anchor (N-palmitoyl cysteine) is attached at cysteine 18. Cysteine 18 is lipidated: S-diacylglycerol cysteine.

It localises to the cell outer membrane. In terms of biological role, lysis proteins are required for both colicin release and partial cell lysis. The protein is Lysis protein for colicin N (cnl) of Escherichia coli.